Here is a 305-residue protein sequence, read N- to C-terminus: Methionyl-tRNA formyltransferase (305 aa).

111–114 (SLLP) contributes to the (6S)-5,6,7,8-tetrahydrofolate binding site.

Belongs to the Fmt family.

The catalysed reaction is L-methionyl-tRNA(fMet) + (6R)-10-formyltetrahydrofolate = N-formyl-L-methionyl-tRNA(fMet) + (6S)-5,6,7,8-tetrahydrofolate + H(+). Attaches a formyl group to the free amino group of methionyl-tRNA(fMet). The formyl group appears to play a dual role in the initiator identity of N-formylmethionyl-tRNA by promoting its recognition by IF2 and preventing the misappropriation of this tRNA by the elongation apparatus. This is Methionyl-tRNA formyltransferase from Helicobacter pylori (strain HPAG1).